A 339-amino-acid chain; its full sequence is Starvation-sensing protein RspB (339 aa).

Positions 37, 59, 89, 92, 95, 103, and 144 each coordinate Zn(2+).

This sequence belongs to the zinc-containing alcohol dehydrogenase family. Requires Zn(2+) as cofactor.

Functionally, not known; probable catabolic enzyme. This chain is Starvation-sensing protein RspB, found in Escherichia coli (strain K12).